The chain runs to 104 residues: Large ribosomal subunit protein uL24 (104 aa).

The protein belongs to the universal ribosomal protein uL24 family. In terms of assembly, part of the 50S ribosomal subunit.

In terms of biological role, one of two assembly initiator proteins, it binds directly to the 5'-end of the 23S rRNA, where it nucleates assembly of the 50S subunit. Functionally, one of the proteins that surrounds the polypeptide exit tunnel on the outside of the subunit. The protein is Large ribosomal subunit protein uL24 of Alteromonas mediterranea (strain DSM 17117 / CIP 110805 / LMG 28347 / Deep ecotype).